The chain runs to 257 residues: Zinc import ATP-binding protein ZnuC (257 aa).

An ABC transporter domain is found at 6-221 (IRLEQVGVSF…PAFVELFGQN (216 aa)). 38–45 (GPNGAGKT) contributes to the ATP binding site.

The protein belongs to the ABC transporter superfamily. Zinc importer (TC 3.A.1.15.5) family. The complex is composed of two ATP-binding proteins (ZnuC), two transmembrane proteins (ZnuB) and a solute-binding protein (ZnuA).

Its subcellular location is the cell inner membrane. The catalysed reaction is Zn(2+)(out) + ATP(in) + H2O(in) = Zn(2+)(in) + ADP(in) + phosphate(in) + H(+)(in). Its function is as follows. Part of the ABC transporter complex ZnuABC involved in zinc import. Responsible for energy coupling to the transport system. The polypeptide is Zinc import ATP-binding protein ZnuC (Pseudomonas entomophila (strain L48)).